The primary structure comprises 806 residues: Ent-atiserene synthase KSL4, chloroplastic (806 aa).

The N-terminal 75 residues, 1–75 (MGIVALILIK…AKLFKKNEVC (75 aa)), are a transit peptide targeting the chloroplast. Residues 33–56 (ASLAGSGLPKTTPPKTASLQSHSP) form a disordered region. Polar residues predominate over residues 45-55 (PPKTASLQSHS). 4 residues coordinate Mg(2+): Asp-556, Asp-560, Asn-700, and Glu-708. Positions 556 to 560 (DDLFD) match the DDXXD motif motif.

It belongs to the terpene synthase family. Mg(2+) is required as a cofactor. In terms of tissue distribution, highly expressed in leaves, and, at low levels, in roots, stems and flowers.

It localises to the plastid. The protein localises to the chloroplast. It catalyses the reaction ent-copalyl diphosphate = ent-atiserene + diphosphate. Its pathway is secondary metabolite biosynthesis; terpenoid biosynthesis. Involved in the biosynthesis of ent-kaurene diterpenoids natural products such as oridonin, miltiradiene, eriocalyxin B and nezukol, known to exhibit antitumor, anti-inflammatory and antibacterial activities. Catalyzes the conversion of ent-copalyl diphosphate (ent-CPP) to ent-atiserene. In Isodon rubescens (Rabdosia rubescens), this protein is Ent-atiserene synthase KSL4, chloroplastic.